The chain runs to 58 residues: Apelin receptor early endogenous ligand (58 aa).

An N-terminal signal peptide occupies residues 1-22; the sequence is MRFFHPLYLLLLLLTVLVLISA.

This sequence belongs to the Elabela/Toddler family. Interacts with aplnra and aplnrb. In terms of tissue distribution, expressed ubiquitously during late blastula and gastrula stages and becomes restricted to the lateral mesoderm, endoderm, and anterior and posterior notochord after gastrulation.

It localises to the secreted. It is found in the extracellular space. Functionally, peptide hormone that functions as endogenous ligand for the G-protein-coupled apelin receptor (aplnra and/or aplnrb), that plays a role in the regulation of normal cardiovascular function and fluid homeostasis. Functions as a balanced agonist activating both G(i) protein pathway and beta-arrestin pathway of APLNR. Downstream G proteins activation, apelin can inhibit cAMP production and activate key intracellular effectors such as ERKs. On the other hand, APLNR activation induces beta-arrestin recruitment to the membrane leading to desensitization and internalization of the receptor. Required for mesendodermal differentiation, blood vessels formation and heart morphogenesis during early development and for adult cardiovascular homeostasis. Acts as a motogen by promoting mesendodermal cell migration during gastrulation by binding and activating the apelin receptor. Acts as an early embryonic regulator of cellular movement with a role in migration and development of cardiac progenitor cells. May act as a chemoattractant for the activation of angioblast migration toward the embryonic midline, i.e. the position of the future vessel formation, during vasculogenesis. Positively regulates sinus venosus (SV)-derived endothelial cells migration into the developing heart to promote coronary blood vessel sprouting. Involved in cardioprotective functions during heart failure. Mediates myocardial contractility in an ERK1/2-dependent manner. The protein is Apelin receptor early endogenous ligand of Danio rerio (Zebrafish).